Here is a 610-residue protein sequence, read N- to C-terminus: Transcription termination factor Rho (610 aa).

A disordered region spans residues Glu117 to Gln227. Residues Val118–Asp131 show a composition bias toward basic and acidic residues. Polar residues predominate over residues Gly178–Gln187. The span at Arg189–Gln198 shows a compositional bias: basic and acidic residues. The span at Gly199–Gly214 shows a compositional bias: basic residues. A compositionally biased stretch (basic and acidic residues) spans Glu215–Gln227. The region spanning Val231 to Ser309 is the Rho RNA-BD domain. Residues Gly352–Ala357, Lys364–Thr369, and Arg395 each bind ATP.

This sequence belongs to the Rho family. As to quaternary structure, homohexamer. The homohexamer assembles into an open ring structure.

Its function is as follows. Facilitates transcription termination by a mechanism that involves Rho binding to the nascent RNA, activation of Rho's RNA-dependent ATPase activity, and release of the mRNA from the DNA template. This Mycobacterium leprae (strain TN) protein is Transcription termination factor Rho.